Here is a 317-residue protein sequence, read N- to C-terminus: 8-oxo-(d)GTP phosphatase (317 aa).

A Nudix hydrolase domain is found at 15 to 148; sequence RIVYAAGAVL…DRKVLCRFAK (134 aa). Residues 43 to 46, Asp48, and 53 to 55 contribute to the substrate site; these read RPRY and KGK. Lys53, Glu69, and Glu73 together coordinate Mg(2+). Residues 54 to 75 carry the Nudix box motif; sequence GKVDPGETAPVGAVREILEETG. Substrate contacts are provided by Tyr89, Lys99, Glu118, and Tyr136. Glu118 serves as a coordination point for Mg(2+).

This sequence belongs to the Nudix hydrolase family. Mg(2+) serves as cofactor.

It catalyses the reaction 8-oxo-dGTP + H2O = 8-oxo-dGDP + phosphate + H(+). The enzyme catalyses 8-oxo-GTP + H2O = 8-oxo-GDP + phosphate + H(+). In terms of biological role, catalyzes the conversion of 8-oxo-dGTP to 8-oxo-dGDP, and 8-oxo-GTP to 8-oxo-GDP. The chain is 8-oxo-(d)GTP phosphatase from Mycobacterium tuberculosis (strain CDC 1551 / Oshkosh).